A 1019-amino-acid chain; its full sequence is Photoactivated adenylate cyclase subunit alpha-like protein 1224-5/1F (1019 aa).

One can recognise a BLUF 1 domain in the interval 55–148 (LRRLMYLSAS…GRMYGWWHLK (94 aa)). The 129-residue stretch at 204 to 332 (VVTVIYLVEF…DWINSASRIT (129 aa)) folds into the Guanylate cyclase 1 domain. Residues 467 to 559 (LITLTYISQA…GVYGSPLDMT (93 aa)) form the BLUF 2 domain. Positions 615–744 (VMLATAISSF…EVRARVLEVE (130 aa)) constitute a Guanylate cyclase 2 domain. The segment at 825–863 (NISCRGGNPPAGGIPTSPKVRPPGRTNSVSSYTPDPKQA) is disordered.

This sequence belongs to the adenylyl cyclase class-4/guanylyl cyclase family. As to quaternary structure, heterotetramer of two alpha and two beta subunits.

The protein resides in the cell projection. The protein localises to the cilium. It localises to the flagellum. This chain is Photoactivated adenylate cyclase subunit alpha-like protein 1224-5/1F, found in Euglena gracilis.